The chain runs to 335 residues: Lipoyl synthase (335 aa).

[4Fe-4S] cluster-binding residues include cysteine 55, cysteine 60, cysteine 66, cysteine 81, cysteine 85, cysteine 88, and serine 292. The region spanning 67–281 (WEDREATFLI…SQRAEEIGFQ (215 aa)) is the Radical SAM core domain.

This sequence belongs to the radical SAM superfamily. Lipoyl synthase family. The cofactor is [4Fe-4S] cluster.

Its subcellular location is the cytoplasm. It catalyses the reaction [[Fe-S] cluster scaffold protein carrying a second [4Fe-4S](2+) cluster] + N(6)-octanoyl-L-lysyl-[protein] + 2 oxidized [2Fe-2S]-[ferredoxin] + 2 S-adenosyl-L-methionine + 4 H(+) = [[Fe-S] cluster scaffold protein] + N(6)-[(R)-dihydrolipoyl]-L-lysyl-[protein] + 4 Fe(3+) + 2 hydrogen sulfide + 2 5'-deoxyadenosine + 2 L-methionine + 2 reduced [2Fe-2S]-[ferredoxin]. The protein operates within protein modification; protein lipoylation via endogenous pathway; protein N(6)-(lipoyl)lysine from octanoyl-[acyl-carrier-protein]: step 2/2. Its function is as follows. Catalyzes the radical-mediated insertion of two sulfur atoms into the C-6 and C-8 positions of the octanoyl moiety bound to the lipoyl domains of lipoate-dependent enzymes, thereby converting the octanoylated domains into lipoylated derivatives. The protein is Lipoyl synthase of Micrococcus luteus (strain ATCC 4698 / DSM 20030 / JCM 1464 / CCM 169 / CCUG 5858 / IAM 1056 / NBRC 3333 / NCIMB 9278 / NCTC 2665 / VKM Ac-2230) (Micrococcus lysodeikticus).